The chain runs to 346 residues: Biotin synthase (346 aa).

The region spanning 38–256 (QQVQVSTLLS…IAVARIMMPT (219 aa)) is the Radical SAM core domain. 3 residues coordinate [4Fe-4S] cluster: Cys53, Cys57, and Cys60. Residues Cys97, Cys128, Cys188, and Arg260 each contribute to the [2Fe-2S] cluster site.

This sequence belongs to the radical SAM superfamily. Biotin synthase family. Homodimer. It depends on [4Fe-4S] cluster as a cofactor. The cofactor is [2Fe-2S] cluster.

It catalyses the reaction (4R,5S)-dethiobiotin + (sulfur carrier)-SH + 2 reduced [2Fe-2S]-[ferredoxin] + 2 S-adenosyl-L-methionine = (sulfur carrier)-H + biotin + 2 5'-deoxyadenosine + 2 L-methionine + 2 oxidized [2Fe-2S]-[ferredoxin]. It functions in the pathway cofactor biosynthesis; biotin biosynthesis; biotin from 7,8-diaminononanoate: step 2/2. Catalyzes the conversion of dethiobiotin (DTB) to biotin by the insertion of a sulfur atom into dethiobiotin via a radical-based mechanism. The sequence is that of Biotin synthase from Salmonella dublin (strain CT_02021853).